Consider the following 335-residue polypeptide: Holliday junction branch migration complex subunit RuvB (335 aa).

The tract at residues 1 to 183 is large ATPase domain (RuvB-L); sequence MDERIISSET…FGVIDHLEFY (183 aa). Residues Leu22, Arg23, Gly64, Lys67, Thr68, Thr69, 130 to 132, Arg173, Tyr183, and Arg220 each bind ATP; that span reads EDY. Thr68 lines the Mg(2+) pocket. A small ATPAse domain (RuvB-S) region spans residues 184–254; the sequence is TEEQLTEIVL…LAKEALTLLQ (71 aa). The interval 257–335 is head domain (RuvB-H); that stretch reads PRGLDTIDQK…HLGISYEKEV (79 aa). The DNA site is built by Arg293, Arg312, and Arg317.

Belongs to the RuvB family. Homohexamer. Forms an RuvA(8)-RuvB(12)-Holliday junction (HJ) complex. HJ DNA is sandwiched between 2 RuvA tetramers; dsDNA enters through RuvA and exits via RuvB. An RuvB hexamer assembles on each DNA strand where it exits the tetramer. Each RuvB hexamer is contacted by two RuvA subunits (via domain III) on 2 adjacent RuvB subunits; this complex drives branch migration. In the full resolvosome a probable DNA-RuvA(4)-RuvB(12)-RuvC(2) complex forms which resolves the HJ.

Its subcellular location is the cytoplasm. The enzyme catalyses ATP + H2O = ADP + phosphate + H(+). Its function is as follows. The RuvA-RuvB-RuvC complex processes Holliday junction (HJ) DNA during genetic recombination and DNA repair, while the RuvA-RuvB complex plays an important role in the rescue of blocked DNA replication forks via replication fork reversal (RFR). RuvA specifically binds to HJ cruciform DNA, conferring on it an open structure. The RuvB hexamer acts as an ATP-dependent pump, pulling dsDNA into and through the RuvAB complex. RuvB forms 2 homohexamers on either side of HJ DNA bound by 1 or 2 RuvA tetramers; 4 subunits per hexamer contact DNA at a time. Coordinated motions by a converter formed by DNA-disengaged RuvB subunits stimulates ATP hydrolysis and nucleotide exchange. Immobilization of the converter enables RuvB to convert the ATP-contained energy into a lever motion, pulling 2 nucleotides of DNA out of the RuvA tetramer per ATP hydrolyzed, thus driving DNA branch migration. The RuvB motors rotate together with the DNA substrate, which together with the progressing nucleotide cycle form the mechanistic basis for DNA recombination by continuous HJ branch migration. Branch migration allows RuvC to scan DNA until it finds its consensus sequence, where it cleaves and resolves cruciform DNA. In Listeria monocytogenes serovar 1/2a (strain ATCC BAA-679 / EGD-e), this protein is Holliday junction branch migration complex subunit RuvB.